Here is a 776-residue protein sequence, read N- to C-terminus: DNA ligase (776 aa).

NAD(+) is bound by residues 31 to 35, 80 to 81, and Glu-112; these read DAEYD and SL. Lys-114 serves as the catalytic N6-AMP-lysine intermediate. NAD(+)-binding residues include Arg-135, Glu-172, Lys-288, and Lys-312. Positions 406, 409, 436, and 442 each coordinate Zn(2+). Positions 693-776 constitute a BRCT domain; it reads AEGLPLAGQT…TFLAEQGIAV (84 aa).

Belongs to the NAD-dependent DNA ligase family. LigA subfamily. It depends on Mg(2+) as a cofactor. Mn(2+) is required as a cofactor.

The catalysed reaction is NAD(+) + (deoxyribonucleotide)n-3'-hydroxyl + 5'-phospho-(deoxyribonucleotide)m = (deoxyribonucleotide)n+m + AMP + beta-nicotinamide D-nucleotide.. In terms of biological role, DNA ligase that catalyzes the formation of phosphodiester linkages between 5'-phosphoryl and 3'-hydroxyl groups in double-stranded DNA using NAD as a coenzyme and as the energy source for the reaction. It is essential for DNA replication and repair of damaged DNA. The sequence is that of DNA ligase from Pseudomonas putida (strain ATCC 700007 / DSM 6899 / JCM 31910 / BCRC 17059 / LMG 24140 / F1).